We begin with the raw amino-acid sequence, 104 residues long: uncharacterized protein (104 aa).

The chain crosses the membrane as a helical span at residues 77 to 98 (IAAVRANIIICACFFYLFCYCS).

It is found in the membrane. This is an uncharacterized protein from Saccharomyces cerevisiae (strain ATCC 204508 / S288c) (Baker's yeast).